Consider the following 882-residue polypeptide: Chondroitin sulfate synthase 3 (882 aa).

Over 1 to 7 (MAVRSRR) the chain is Cytoplasmic. A helical; Signal-anchor for type II membrane protein transmembrane segment spans residues 8–28 (PWMSVALGLVLGFTAASWLIA). Over 29–882 (PRVAELSERK…LGVRYNRTLS (854 aa)) the chain is Lumenal. The segment at 46–167 (SYYGRSAAGP…GDGGAAAPSA (122 aa)) is disordered. Composition is skewed to low complexity over residues 59–69 (AQQPLPQPQSR) and 120–131 (GATGLPGAPAAE). 3 N-linked (GlcNAc...) asparagine glycosylation sites follow: N155, N279, and N710. Residues D720 and H834 each contribute to the a divalent metal cation site. The N-linked (GlcNAc...) asparagine glycan is linked to N878.

It belongs to the chondroitin N-acetylgalactosaminyltransferase family. Co(2+) serves as cofactor. Mn(2+) is required as a cofactor. It depends on Cd(2+) as a cofactor. Detected at low levels in brain, cerebral cortex, uterus and small intestine.

It localises to the golgi apparatus. It is found in the golgi stack membrane. The enzyme catalyses 3-O-(beta-D-GlcA-(1-&gt;3)-beta-D-GalNAc-(1-&gt;4)-beta-D-GlcA-(1-&gt;3)-beta-D-Gal-(1-&gt;3)-beta-D-Gal-(1-&gt;4)-beta-D-Xyl)-L-seryl-[protein] + UDP-N-acetyl-alpha-D-galactosamine = 3-O-(beta-D-GalNAc-(1-&gt;4)-beta-D-GlcA-(1-&gt;3)-beta-D-GalNAc-(1-&gt;4)-beta-D-GlcA-(1-&gt;3)-beta-D-Gal-(1-&gt;3)-beta-D-Gal-(1-&gt;4)-beta-D-Xyl)-L-seryl-[protein] + UDP + H(+). The catalysed reaction is 3-O-{beta-D-GlcA-(1-&gt;3)-[beta-D-GalNAc-(1-&gt;4)-beta-D-GlcA-(1-&gt;3)](n)-beta-D-GalNAc-(1-&gt;4)-beta-D-GlcA-(1-&gt;3)-beta-D-Gal-(1-&gt;3)-beta-D-Gal-(1-&gt;4)-beta-D-Xyl}-L-seryl-[protein] + UDP-N-acetyl-alpha-D-galactosamine = 3-O-{[beta-D-GalNAc-(1-&gt;4)-beta-D-GlcA-(1-&gt;3)](n+1)-beta-D-GalNAc-(1-&gt;4)-beta-D-GlcA-(1-&gt;3)-beta-D-Gal-(1-&gt;3)-beta-D-Gal-(1-&gt;4)-beta-D-Xyl}-L-seryl-[protein] + UDP + H(+). It carries out the reaction 3-O-(beta-D-GalNAc-(1-&gt;4)-beta-D-GlcA-(1-&gt;3)-beta-D-Gal-(1-&gt;3)-beta-D-Gal-(1-&gt;4)-beta-D-Xyl)-L-seryl-[protein] + UDP-alpha-D-glucuronate = 3-O-(beta-D-GlcA-(1-&gt;3)-beta-D-GalNAc-(1-&gt;4)-beta-D-GlcA-(1-&gt;3)-beta-D-Gal-(1-&gt;3)-beta-D-Gal-(1-&gt;4)-beta-D-Xyl)-L-seryl-[protein] + UDP + H(+). It catalyses the reaction 3-O-{[beta-D-GalNAc-(1-&gt;4)-beta-D-GlcA-(1-&gt;3)](n)-beta-D-GalNAc-(1-&gt;4)-beta-D-GlcA-(1-&gt;3)-beta-D-Gal-(1-&gt;3)-beta-D-Gal-(1-&gt;4)-beta-D-Xyl}-L-seryl-[protein] + UDP-alpha-D-glucuronate = 3-O-{beta-D-GlcA-(1-&gt;3)-[beta-D-GalNAc-(1-&gt;4)-beta-D-GlcA-(1-&gt;3)](n)-beta-D-GalNAc-(1-&gt;4)-beta-D-GlcA-(1-&gt;3)-beta-D-Gal-(1-&gt;3)-beta-D-Gal-(1-&gt;4)-beta-D-Xyl}-L-seryl-[protein] + UDP + H(+). Has both beta-1,3-glucuronic acid and beta-1,4-N-acetylgalactosamine transferase activity. Transfers glucuronic acid (GlcUA) from UDP-GlcUA and N-acetylgalactosamine (GalNAc) from UDP-GalNAc to the non-reducing end of the elongating chondroitin polymer. Specific activity is much reduced compared to CHSY1. The polypeptide is Chondroitin sulfate synthase 3 (CHSY3) (Homo sapiens (Human)).